Consider the following 186-residue polypeptide: ATP synthase subunit b (186 aa).

Residues 5–25 (LILNLLVLLAPAAVFAAGGGH) form a helical membrane-spanning segment.

It belongs to the ATPase B chain family. F-type ATPases have 2 components, F(1) - the catalytic core - and F(0) - the membrane proton channel. F(1) has five subunits: alpha(3), beta(3), gamma(1), delta(1), epsilon(1). F(0) has three main subunits: a(1), b(2) and c(10-14). The alpha and beta chains form an alternating ring which encloses part of the gamma chain. F(1) is attached to F(0) by a central stalk formed by the gamma and epsilon chains, while a peripheral stalk is formed by the delta and b chains.

Its subcellular location is the cell inner membrane. F(1)F(0) ATP synthase produces ATP from ADP in the presence of a proton or sodium gradient. F-type ATPases consist of two structural domains, F(1) containing the extramembraneous catalytic core and F(0) containing the membrane proton channel, linked together by a central stalk and a peripheral stalk. During catalysis, ATP synthesis in the catalytic domain of F(1) is coupled via a rotary mechanism of the central stalk subunits to proton translocation. Functionally, component of the F(0) channel, it forms part of the peripheral stalk, linking F(1) to F(0). The polypeptide is ATP synthase subunit b (Bdellovibrio bacteriovorus (strain ATCC 15356 / DSM 50701 / NCIMB 9529 / HD100)).